A 203-amino-acid chain; its full sequence is uncharacterized protein (203 aa).

The chain crosses the membrane as a helical span at residues 171 to 191 (VGYLSIWLKEYWYLVVLFVLI).

The protein localises to the membrane. This is an uncharacterized protein from Methanocaldococcus jannaschii (strain ATCC 43067 / DSM 2661 / JAL-1 / JCM 10045 / NBRC 100440) (Methanococcus jannaschii).